Reading from the N-terminus, the 68-residue chain is U-poneritoxin(01)-Om4b (68 aa).

Positions 1–25 (MKPSGLTLAFLVVFMMAIMYNSVQA) are cleaved as a signal peptide. A propeptide spanning residues 26 to 39 (EALADADAEAFAEA) is cleaved from the precursor.

The protein belongs to the formicidae venom precursor-01 superfamily. As to quaternary structure, homo- or heterodimer with PLP4 (AC A0A348G5W0); disulfide-linked. Post-translationally, truncated sequences of this peptide have also been found in the venom. It is possible they have been cleaved in the venom. Expressed by the venom gland.

It is found in the secreted. In terms of biological role, this homodimer composed of two cationic amphipathic alpha-helical peptides has antimicrobial activities against E.coli, S.aureus (MIC=3.1 uM), and S.cerevisiae (MIC=3.1 uM). It also shows histamine-releasing activity (66.4% at 10 uM) and a weak hemolytic activity (10.5% at 50 uM). The polypeptide is U-poneritoxin(01)-Om4b (Odontomachus monticola (Trap-jaw ant)).